Consider the following 642-residue polypeptide: Chaperone protein HtpG (642 aa).

The a; substrate-binding stretch occupies residues 1–348 (MSTKIEQLEF…AQDLSLNVSR (348 aa)). The segment at 349–564 (EILQQDRQIR…AFSMSPALER (216 aa)) is b. Residues 565–642 (MYRASGQPVP…MLANRLARTV (78 aa)) are c.

Belongs to the heat shock protein 90 family. Homodimer.

Its subcellular location is the cytoplasm. In terms of biological role, molecular chaperone. Has ATPase activity. The polypeptide is Chaperone protein HtpG (Rhodococcus jostii (strain RHA1)).